The sequence spans 95 residues: Co-chaperonin GroES (95 aa).

It belongs to the GroES chaperonin family. In terms of assembly, heptamer of 7 subunits arranged in a ring. Interacts with the chaperonin GroEL.

It is found in the cytoplasm. Functionally, together with the chaperonin GroEL, plays an essential role in assisting protein folding. The GroEL-GroES system forms a nano-cage that allows encapsulation of the non-native substrate proteins and provides a physical environment optimized to promote and accelerate protein folding. GroES binds to the apical surface of the GroEL ring, thereby capping the opening of the GroEL channel. This Ruegeria sp. (strain TM1040) (Silicibacter sp.) protein is Co-chaperonin GroES.